The following is a 100-amino-acid chain: Pancreatic polypeptide prohormone (100 aa).

Positions 1 to 29 are cleaved as a signal peptide; sequence MAVAYCCLSLFLVSTWVALLLQPLQGTWG. Tyrosine amide is present on Tyr65.

This sequence belongs to the NPY family. Post-translationally, no icosapeptide-like peptide is cleaved from the C-terminal.

Its subcellular location is the secreted. In terms of biological role, hormone secreted by pancreatic cells that acts as a regulator of pancreatic and gastrointestinal functions probably by signaling through the G protein-coupled receptor NPY4R2. The protein is Pancreatic polypeptide prohormone (Ppy) of Mus musculus (Mouse).